Reading from the N-terminus, the 335-residue chain is Protein MET1, chloroplastic (335 aa).

Over residues 1–18 (MSLAPSSYPSLYSSPSLP) the composition is skewed to low complexity. Disordered stretches follow at residues 1–29 (MSLAPSSYPSLYSSPSLPRTQQTKQNPSL) and 66–88 (SETESSAKAEAGGDGEEEEKYET). The transit peptide at 1–73 (MSLAPSSYPS…KASETESSAK (73 aa)) directs the protein to the chloroplast. Over residues 19–29 (RTQQTKQNPSL) the composition is skewed to polar residues. The segment covering 78–88 (GDGEEEEKYET) has biased composition (acidic residues). The region spanning 97-136 (YGLKFRKGRDGGTYIDAILPGGSADKTGKFTVGDRVIATS) is the PDZ domain. 3 TPR repeats span residues 217-250 (REKDLREGLQFSKNGKYEEALERFESVLGSKPTP), 254-287 (SVASYNVACCYSKLNQVQAGLSALEEALKSGYED), and 289-323 (KRIRSDPDLETLRKSKDFDPLLKQFDESFINESAI).

Interacts directly with stromal loops of photosystem II (PSII) core components psbB (CP47) and psbC (CP43). Associates with PSII subcomplexes formed during the PSII repair cycle (e.g. PSII dimers, PSII monomers, CP43-less PSII monomerand PSII reaction centers). Post-translationally, phosphorylated rapidly (e.g. within 5 minutes) but transiently at threonine and serine residues after wounding. In terms of tissue distribution, expressed in leaves (at protein level). Mostly expressed in leaves, stems and siliques, and, to a lower extent, in flowers and senescent leaves, but not present in roots (at protein level).

Its subcellular location is the plastid. The protein localises to the chloroplast membrane. It is found in the chloroplast thylakoid membrane. In terms of biological role, involved in photosystem II supercomplex formation and repair, probably acting as a psbB/psbC chaperone on the stromal side of the membrane. The protein is Protein MET1, chloroplastic of Arabidopsis thaliana (Mouse-ear cress).